A 256-amino-acid polypeptide reads, in one-letter code: MSVLIEIHQFPCLNDNYGYLVHEPGSGRTIAIDTPDAAVYLAEAEKMSWTISEIWNTHWHPDHAGGNLKIKEATGCKIIGPAGEADKIPGIDRRVKGGDTVELGGATATVIDVPGHTLGHIAFHFPDQEAAFVGDAVFALGCGRVFEGTMEMMWESLKRIKKLPKKTQLYCAHEYTASNAKFAVTIEPENKALKEYVAWIEKRRAEDKPTVPALLERELETNPFLRADLPEMQLAMGHAGNAAATFGEIRGRKDRF.

Zn(2+) is bound by residues H58, H60, D62, H63, H116, D135, and H173.

This sequence belongs to the metallo-beta-lactamase superfamily. Glyoxalase II family. As to quaternary structure, monomer. Requires Zn(2+) as cofactor.

It catalyses the reaction an S-(2-hydroxyacyl)glutathione + H2O = a 2-hydroxy carboxylate + glutathione + H(+). It functions in the pathway secondary metabolite metabolism; methylglyoxal degradation; (R)-lactate from methylglyoxal: step 2/2. Functionally, thiolesterase that catalyzes the hydrolysis of S-D-lactoyl-glutathione to form glutathione and D-lactic acid. The sequence is that of Hydroxyacylglutathione hydrolase from Hyphomonas neptunium (strain ATCC 15444).